We begin with the raw amino-acid sequence, 201 residues long: Probable GTP-binding protein EngB (201 aa).

The region spanning 22–195 (SLPEIAFCGR…MEQLEMILKY (174 aa)) is the EngB-type G domain. Residues 30–37 (GRSNVGKS), 57–61 (GKTRT), 75–78 (DLPG), 142–145 (TKLD), and 174–176 (YSS) contribute to the GTP site. Residues S37 and T59 each coordinate Mg(2+).

It belongs to the TRAFAC class TrmE-Era-EngA-EngB-Septin-like GTPase superfamily. EngB GTPase family. Requires Mg(2+) as cofactor.

Necessary for normal cell division and for the maintenance of normal septation. In Finegoldia magna (strain ATCC 29328 / DSM 20472 / WAL 2508) (Peptostreptococcus magnus), this protein is Probable GTP-binding protein EngB.